A 171-amino-acid polypeptide reads, in one-letter code: Crossover junction endodeoxyribonuclease RuvC (171 aa).

Catalysis depends on residues aspartate 11, glutamate 71, and aspartate 143. 3 residues coordinate Mg(2+): aspartate 11, glutamate 71, and aspartate 143.

The protein belongs to the RuvC family. As to quaternary structure, homodimer which binds Holliday junction (HJ) DNA. The HJ becomes 2-fold symmetrical on binding to RuvC with unstacked arms; it has a different conformation from HJ DNA in complex with RuvA. In the full resolvosome a probable DNA-RuvA(4)-RuvB(12)-RuvC(2) complex forms which resolves the HJ. Mg(2+) serves as cofactor.

The protein resides in the cytoplasm. The enzyme catalyses Endonucleolytic cleavage at a junction such as a reciprocal single-stranded crossover between two homologous DNA duplexes (Holliday junction).. Functionally, the RuvA-RuvB-RuvC complex processes Holliday junction (HJ) DNA during genetic recombination and DNA repair. Endonuclease that resolves HJ intermediates. Cleaves cruciform DNA by making single-stranded nicks across the HJ at symmetrical positions within the homologous arms, yielding a 5'-phosphate and a 3'-hydroxyl group; requires a central core of homology in the junction. The consensus cleavage sequence is 5'-(A/T)TT(C/G)-3'. Cleavage occurs on the 3'-side of the TT dinucleotide at the point of strand exchange. HJ branch migration catalyzed by RuvA-RuvB allows RuvC to scan DNA until it finds its consensus sequence, where it cleaves and resolves the cruciform DNA. The sequence is that of Crossover junction endodeoxyribonuclease RuvC from Chelativorans sp. (strain BNC1).